The primary structure comprises 89 residues: Small ribosomal subunit protein uS15 (89 aa).

It belongs to the universal ribosomal protein uS15 family. As to quaternary structure, part of the 30S ribosomal subunit. Forms a bridge to the 50S subunit in the 70S ribosome, contacting the 23S rRNA.

Functionally, one of the primary rRNA binding proteins, it binds directly to 16S rRNA where it helps nucleate assembly of the platform of the 30S subunit by binding and bridging several RNA helices of the 16S rRNA. Its function is as follows. Forms an intersubunit bridge (bridge B4) with the 23S rRNA of the 50S subunit in the ribosome. The sequence is that of Small ribosomal subunit protein uS15 from Rhizobium johnstonii (strain DSM 114642 / LMG 32736 / 3841) (Rhizobium leguminosarum bv. viciae).